The following is a 743-amino-acid chain: Tudor domain-containing protein 3 (743 aa).

The interval K241–R262 is disordered. The 41-residue stretch at L286–S326 folds into the UBA domain. 2 disordered regions span residues S327–T365 and E380–R549. Position 349 is a phosphoserine (S349). Residues P414–K431 show a composition bias toward basic and acidic residues. A compositionally biased stretch (polar residues) spans D432–L445. S438 is subject to Phosphoserine. 2 stretches are compositionally biased toward basic and acidic residues: residues A464–S484 and R536–R549. K563 participates in a covalent cross-link: Glycyl lysine isopeptide (Lys-Gly) (interchain with G-Cter in SUMO2). Residues T572–K603 form a disordered region. The region spanning V647–E707 is the Tudor domain. A compositionally biased stretch (basic and acidic residues) spans Y711–P725. Residues Y711–N743 are disordered. The tract at residues G723–N743 is EBM motif; may mediate interaction with the EJC.

Component of mRNA stress granules. Interacts with FMR1, FXR1, FXR2, EWSR1, FUS, SERBP1, EEF1A1 and DDX3X or DDX3Y, and with the small nuclear ribonucleoprotein-associated proteins SNRPB and SNRPN. Interacts with 'Lys-48'-linked tetra-ubiquitin, but not with monoubiquitin or 'Lys-63'-linked ubiquitin chains. May interact with the exon junction complex (EJC) composed at least of CASC3, EIF4A3, MAGOH and RBM8A. Interacts with POLR2A (via the C-terminal domain (CTD)).

It is found in the cytoplasm. Its subcellular location is the nucleus. Scaffolding protein that specifically recognizes and binds dimethylarginine-containing proteins. Plays a role in the regulation of translation of target mRNAs by binding Arg/Gly-rich motifs (GAR) in dimethylarginine-containing proteins. In nucleus, acts as a coactivator: recognizes and binds asymmetric dimethylation on the core histone tails associated with transcriptional activation (H3R17me2a and H4R3me2a) and recruits proteins at these arginine-methylated loci. In cytoplasm, acts as an antiviral factor that participates in the assembly of stress granules together with G3BP1. This chain is Tudor domain-containing protein 3 (Tdrd3), found in Mus musculus (Mouse).